Here is a 277-residue protein sequence, read N- to C-terminus: Ribosomal RNA small subunit methyltransferase A (277 aa).

S-adenosyl-L-methionine is bound by residues N23, L25, G50, E75, D98, and N121.

It belongs to the class I-like SAM-binding methyltransferase superfamily. rRNA adenine N(6)-methyltransferase family. RsmA subfamily.

It is found in the cytoplasm. It catalyses the reaction adenosine(1518)/adenosine(1519) in 16S rRNA + 4 S-adenosyl-L-methionine = N(6)-dimethyladenosine(1518)/N(6)-dimethyladenosine(1519) in 16S rRNA + 4 S-adenosyl-L-homocysteine + 4 H(+). Specifically dimethylates two adjacent adenosines (A1518 and A1519) in the loop of a conserved hairpin near the 3'-end of 16S rRNA in the 30S particle. May play a critical role in biogenesis of 30S subunits. The protein is Ribosomal RNA small subunit methyltransferase A of Paraburkholderia xenovorans (strain LB400).